Consider the following 225-residue polypeptide: Redox-sensing transcriptional repressor Rex (225 aa).

The segment at residues 16–55 (IYYRYLNILLDADKKRVSSTELSEAVKVDSATIRRDFSYF) is a DNA-binding region (H-T-H motif). 90 to 95 (GVGNLG) serves as a coordination point for NAD(+).

Belongs to the transcriptional regulatory Rex family. Homodimer.

It is found in the cytoplasm. In terms of biological role, modulates transcription in response to changes in cellular NADH/NAD(+) redox state. The polypeptide is Redox-sensing transcriptional repressor Rex (Lactiplantibacillus plantarum (strain ATCC BAA-793 / NCIMB 8826 / WCFS1) (Lactobacillus plantarum)).